Consider the following 437-residue polypeptide: Vacuolar protein sorting-associated protein 4A (437 aa).

The tract at residues 1–84 (MTTSTLQKAI…RSKEKHGKKP (84 aa)) is interaction with CHMP1B. One can recognise an MIT domain in the interval 2–80 (TTSTLQKAID…KDYLRSKEKH (79 aa)). Lysine 8 bears the N6-acetyllysine mark. The interval 75 to 106 (RSKEKHGKKPVKENQSEGKGSDSDSEGDNPEK) is disordered. A compositionally biased stretch (basic and acidic residues) spans 84-96 (PVKENQSEGKGSD). Phosphoserine occurs at positions 95 and 97. Residue 167-174 (GPPGTGKS) participates in ATP binding.

The protein belongs to the AAA ATPase family. In terms of assembly, proposed to be monomeric or homodimeric in nucleotide-free form and to oligomerize upon binding to ATP to form two stacked hexameric or heptameric rings with a central pore through which ESCRT-III substrates are translocated in an ATP-dependent manner. Interacts with CHMP1A, CHMP1B, CHMP2A, CHMP2B, CHMP3, CHMP4A, CHMP4B, CHMP4C and CHMP6. Interacts with VPS4B; the interaction suggests a heteromeric assembly with VPS4B. Interacts with SPAST. Interacts with IST1. Interacts with ZFYVE19/ANCHR; leading to retain it at midbody. In terms of tissue distribution, ubiquitously expressed.

Its subcellular location is the late endosome membrane. The protein localises to the midbody. The protein resides in the cytoplasm. It localises to the cytoskeleton. It is found in the spindle. The catalysed reaction is ATP + H2O = ADP + phosphate + H(+). Functionally, involved in late steps of the endosomal multivesicular bodies (MVB) pathway. Recognizes membrane-associated ESCRT-III assemblies and catalyzes their disassembly, possibly in combination with membrane fission. Redistributes the ESCRT-III components to the cytoplasm for further rounds of MVB sorting. MVBs contain intraluminal vesicles (ILVs) that are generated by invagination and scission from the limiting membrane of the endosome and mostly are delivered to lysosomes enabling degradation of membrane proteins, such as stimulated growth factor receptors, lysosomal enzymes and lipids. It is required for proper accomplishment of various processes including the regulation of endosome size, primary cilium organization, mitotic spindle organization, chromosome segregation, and nuclear envelope sealing and spindle disassembly during anaphase. Involved in cytokinesis: retained at the midbody by ZFYVE19/ANCHR and CHMP4C until abscission checkpoint signaling is terminated at late cytokinesis. It is then released following dephosphorylation of CHMP4C, leading to abscission. VPS4A/B are required for the exosomal release of SDCBP, CD63 and syndecan. Critical for normal erythroblast cytokinesis and correct erythropoiesis. In terms of biological role, (Microbial infection) In conjunction with the ESCRT machinery also appears to function in topologically equivalent membrane fission events, such as the terminal stages of cytokinesis and enveloped virus budding (HIV-1 and other lentiviruses). This chain is Vacuolar protein sorting-associated protein 4A, found in Homo sapiens (Human).